A 65-amino-acid chain; its full sequence is MIIWILPCRMPMNLRKDERINISKTSSSKIKEINQLRHIIRKKNRQIQILIIMLNILRCCHRMKE.

The protein belongs to the rhabdoviruses C protein family.

Seems to stimulates transcription by the viral polymerase. May play a role in viral pathogenesis or transmission by insects vectors. In Aedes (Bovine), this protein is Protein C' (P).